We begin with the raw amino-acid sequence, 634 residues long: Proline and serine-rich protein 3 (634 aa).

Disordered regions lie at residues 1–69 (MFPK…LIDN), 81–142 (FRQA…TSLA), 185–242 (DASS…ATLK), 368–455 (VPPT…FEGP), and 472–534 (FPDS…TAPK). Residues 15 to 24 (RTGATRSQRP) are compositionally biased toward polar residues. Composition is skewed to low complexity over residues 40 to 56 (ESWP…STTE), 128 to 140 (VTGP…SSTS), and 185 to 202 (DASS…SPSS). Residues 203-215 (VTFNPDSNKSSNP) are compositionally biased toward polar residues. Over residues 368–377 (VPPTSTSTTP) the composition is skewed to low complexity. Residues 378–399 (APTPTPQVCIPGPPTSAPPPCA) are compositionally biased toward pro residues. The segment covering 436–448 (VSTSSHQKTTVPD) has biased composition (polar residues). Residues 503–515 (PESRRGSKTESRK) are compositionally biased toward basic and acidic residues. Phosphoserine is present on S588.

The protein localises to the cytoplasm. It is found in the cytoskeleton. It localises to the microtubule organizing center. Its subcellular location is the centrosome. This chain is Proline and serine-rich protein 3 (Proser3), found in Mus musculus (Mouse).